The primary structure comprises 570 residues: Periplasmic trehalase (570 aa).

An N-terminal signal peptide occupies residues 1–34 (MITPALRHSGTLSFAIKLTVASTLLTFASLSAHA). Residues arginine 157, 164 to 165 (WD), asparagine 201, 210 to 212 (RSQ), 282 to 284 (RPE), and glycine 315 contribute to the substrate site. Residues aspartate 317 and glutamate 501 each act as proton donor/acceptor in the active site. Position 516 (glutamate 516) interacts with substrate. A disordered region spans residues 542–570 (KPCDSVPATRPAAPGASQPAPQKQVETTP). Residues 552 to 570 (PAAPGASQPAPQKQVETTP) are compositionally biased toward low complexity.

This sequence belongs to the glycosyl hydrolase 37 family. In terms of assembly, monomer.

It is found in the periplasm. The enzyme catalyses alpha,alpha-trehalose + H2O = alpha-D-glucose + beta-D-glucose. Functionally, provides the cells with the ability to utilize trehalose at high osmolarity by splitting it into glucose molecules that can subsequently be taken up by the phosphotransferase-mediated uptake system. The protein is Periplasmic trehalase of Citrobacter koseri (strain ATCC BAA-895 / CDC 4225-83 / SGSC4696).